A 351-amino-acid chain; its full sequence is MTIAIGQEKTRGGFDLVDDWLKRDRFVFVGWSGLLLFPCAYLAVGGWLTGTTFVTSWYTHGLASSYLEGCNFLTAAVSTPANSMGHSLLFLWGPEAQGDFTRWCQIGGLWAFIALHGSFGLIGFCLRQFEIARLVGLRPYNAIAFSGPIAVFVSVFLMYPLGQASWFFAPSLGVAAIFRFLLFLQGFHNWTLNPFHMMGVAGILGGALLCAIHGATVQNTLFEDGDAADTFRAFTPTQSEETYSMVTANRFWSQIFGVAFSNKRWLHFFMLFVPVTGLWTSAFGIVGLALNLRAYDFVSQELRAAEDPEFETFYTKNILLNEGIRSWMAAQDQPHENFIFPEEVLPRGNAL.

The chain crosses the membrane as a helical span at residues 39-59 (CAYLAVGGWLTGTTFVTSWYT). H116 contacts chlorophyll a. A helical membrane pass occupies residues 123–139 (GFCLRQFEIARLVGLRP). 2 residues coordinate pheophytin a: Q128 and N141. The helical transmembrane segment at 151 to 164 (VFVSVFLMYPLGQA) threads the bilayer. H196 serves as a coordination point for chlorophyll a. The helical transmembrane segment at 206 to 226 (GALLCAIHGATVQNTLFEDGD) threads the bilayer. Residues H213 and F260 each coordinate a plastoquinone. H213 lines the Fe cation pocket. H267 lines the Fe cation pocket. Residues 277 to 293 (GLWTSAFGIVGLALNLR) traverse the membrane as a helical segment.

This sequence belongs to the reaction center PufL/M/PsbA/D family. As to quaternary structure, PSII is composed of 1 copy each of membrane proteins PsbA, PsbB, PsbC, PsbD, PsbE, PsbF, PsbH, PsbI, PsbJ, PsbK, PsbL, PsbM, PsbT, PsbX, PsbY, PsbZ, Psb30/Ycf12, at least 3 peripheral proteins of the oxygen-evolving complex and a large number of cofactors. It forms dimeric complexes. The D1/D2 heterodimer binds P680, chlorophylls that are the primary electron donor of PSII, and subsequent electron acceptors. It shares a non-heme iron and each subunit binds pheophytin, quinone, additional chlorophylls, carotenoids and lipids. There is also a Cl(-1) ion associated with D1 and D2, which is required for oxygen evolution. The PSII complex binds additional chlorophylls, carotenoids and specific lipids. is required as a cofactor.

The protein localises to the plastid. The protein resides in the chloroplast thylakoid membrane. It catalyses the reaction 2 a plastoquinone + 4 hnu + 2 H2O = 2 a plastoquinol + O2. In terms of biological role, photosystem II (PSII) is a light-driven water:plastoquinone oxidoreductase that uses light energy to abstract electrons from H(2)O, generating O(2) and a proton gradient subsequently used for ATP formation. It consists of a core antenna complex that captures photons, and an electron transfer chain that converts photonic excitation into a charge separation. The D1/D2 (PsbA/PsbD) reaction center heterodimer binds P680, the primary electron donor of PSII as well as several subsequent electron acceptors. D2 is needed for assembly of a stable PSII complex. This Porphyra purpurea (Red seaweed) protein is Photosystem II D2 protein.